A 229-amino-acid chain; its full sequence is MKLSFHGQSTIYFEGNGKKVIVDPFISGNDKCDLDEQTLEVDYIILTHGHADHFGDVVELANRNHATVIGSAELQGYLSTYHGVENVHGMNIGGKAKFDFGTVKFVQAFHSSSFTHDNGVPVYLGMPMGIIVEAEGKTIYHTGDTGLFSDMKLIADRHPVDVCFVPIGDNFTMGIEDASYAINEFIKPTISVPIHYNTFPLIEQDPEQFKDAVQVGEVQILKPGESVEF.

It belongs to the UPF0173 family.

The polypeptide is UPF0173 metal-dependent hydrolase SERP1270 (Staphylococcus epidermidis (strain ATCC 35984 / DSM 28319 / BCRC 17069 / CCUG 31568 / BM 3577 / RP62A)).